Here is a 573-residue protein sequence, read N- to C-terminus: Developmental and secondary metabolism regulator veA (573 aa).

Residues 1–11 show a composition bias toward pro residues; it reads MATLAAPPPPL. Disordered stretches follow at residues 1-24 and 39-63; these read MATLAAPPPPLGESGNSNSVSRIT and QPKRARACGQGSKSHTDRRPVDPPP. The region spanning 27–230 is the Velvet domain; it reads GKKITYKLNI…AEQGCRVRIR (204 aa). Residues 41 to 46 carry the Nuclear localization signal motif; it reads KRARAC. A phosphothreonine mark is found at threonine 167 and threonine 170. Serine 183 carries the phosphoserine modification. Disordered regions lie at residues 236–295, 307–367, and 384–573; these read RRRG…RRPS, YQRP…SYQS, and SHIP…ATMR. Basic and acidic residues predominate over residues 241-260; it reads KRTEDYDYDNERGYNNRRPD. Tyrosine 254 carries the phosphotyrosine modification. Pro residues-rich tracts occupy residues 318–339 and 347–361; these read SSTPIPAPIPMPGPVALPPSTP and PAPPSVPLAAPPPLH. Over residues 387 to 412 the composition is skewed to low complexity; the sequence is PQQTTTPTHPYSPRSSISHSRNQSIS. Polar residues predominate over residues 452–493; sequence PSVNSRSKTPSNMITSLPPIQSLSELPSTTSQPSSAIGSSPA. Residues 459 to 498 are PEST; it reads KTPSNMITSLPPIQSLSELPSTTSQPSSAIGSSPANEPGP. The span at 510 to 522 shows a compositional bias: basic and acidic residues; that stretch reads RTYEESFGHDDRP.

This sequence belongs to the velvet family. VeA subfamily. In terms of assembly, component of the heterotrimeric velvet complex composed of laeA, veA and velB; VeA acting as a bridging protein between laeA and velB. Interacts with the light-sensing phytochrome fphA. Interacts with llmF. Phosphorylated at Thr-167, Thr-170, Ser-183 and Tyr-254. Thr-167 should be phosphorylated and T170 and S183 should be dephosphorylated to achieve light induction of conidiation. Phosphorylation of Ser-183 and Tyr-254 influence sterigmatocystin production in a light-independent manner. Phosphorylation of Thr-167 and Thr-170 modulates expression of veA.

It is found in the nucleus. The protein resides in the cytoplasm. Component of the velvet transcription factor complex that controls sexual/asexual developmental ratio in response to light, promoting sexual development in the darkness while stimulating asexual sporulation under illumination. The velvet complex acts as a global regulator for secondary metabolite gene expression. Controls the expression of the sterigmatocystin and penicillin gene clusters. Represses the cryptic ors gene cluster producing orsellinic acid and its F9775 derivatives in a laeA-independent manner. Required for full induction of faoA gene expression by fructosyl amines. Positively regulates the expression of the early sexual development gene esdC. Controls the expression of mannoprotein mnpA. The polypeptide is Developmental and secondary metabolism regulator veA (Emericella nidulans (strain FGSC A4 / ATCC 38163 / CBS 112.46 / NRRL 194 / M139) (Aspergillus nidulans)).